We begin with the raw amino-acid sequence, 194 residues long: Protein GrpE (194 aa).

Residues methionine 1–glutamine 12 show a composition bias toward polar residues. The tract at residues methionine 1–glutamate 39 is disordered.

Belongs to the GrpE family. In terms of assembly, homodimer.

Its subcellular location is the cytoplasm. Functionally, participates actively in the response to hyperosmotic and heat shock by preventing the aggregation of stress-denatured proteins, in association with DnaK and GrpE. It is the nucleotide exchange factor for DnaK and may function as a thermosensor. Unfolded proteins bind initially to DnaJ; upon interaction with the DnaJ-bound protein, DnaK hydrolyzes its bound ATP, resulting in the formation of a stable complex. GrpE releases ADP from DnaK; ATP binding to DnaK triggers the release of the substrate protein, thus completing the reaction cycle. Several rounds of ATP-dependent interactions between DnaJ, DnaK and GrpE are required for fully efficient folding. This chain is Protein GrpE, found in Erwinia tasmaniensis (strain DSM 17950 / CFBP 7177 / CIP 109463 / NCPPB 4357 / Et1/99).